The sequence spans 504 residues: Prenylcysteine oxidase 1 (504 aa).

An N-terminal signal peptide occupies residues 1–28 (MGRFAATLVGSLFGLGLLLCGLGRLASA). N-linked (GlcNAc...) asparagine glycosylation is found at N196, N322, and N352.

This sequence belongs to the prenylcysteine oxidase family. FAD is required as a cofactor. As to expression, expressed mainly in cerebrum.

Its subcellular location is the lysosome. The enzyme catalyses an S-polyprenyl-L-cysteine + O2 + H2O = a polyprenal + L-cysteine + H2O2. It carries out the reaction S-(2E,6E)-farnesyl-L-cysteine + O2 + H2O = (2E,6E)-farnesal + L-cysteine + H2O2. The catalysed reaction is [(2E,6E,10E)-geranylgeranyl]-L-cysteine + O2 + H2O = (2E,6E,10E)-geranylgeranial + L-cysteine + H2O2. Prenylcysteine oxidase that cleaves the thioether bond of prenyl-L-cysteines, such as farnesylcysteine and geranylgeranylcysteine. Only active against free prenylcysteines and not prenylcysteine residues within prenylated proteins or peptides. Involved in the final step in the degradation of prenylated proteins, by degrading prenylcysteines after the protein has been degraded. The sequence is that of Prenylcysteine oxidase 1 from Rattus norvegicus (Rat).